A 339-amino-acid chain; its full sequence is Starvation-sensing protein RspB (339 aa).

Zn(2+) is bound by residues C37, H59, C89, C92, C95, C103, and E144.

Belongs to the zinc-containing alcohol dehydrogenase family. Requires Zn(2+) as cofactor.

Its function is as follows. Not known; probable catabolic enzyme. This chain is Starvation-sensing protein RspB, found in Escherichia coli (strain K12).